The sequence spans 334 residues: Glyoxylate reductase (334 aa).

NADP(+) is bound by residues 158–161, 180–182, and 239–241; these read FGRI, SRT, and IAR. Active-site residues include R241 and E270. Residue H288 is the Proton donor of the active site. Residue 288–290 participates in NADP(+) binding; the sequence is HIG.

Belongs to the D-isomer specific 2-hydroxyacid dehydrogenase family. GyaR subfamily. In terms of assembly, homodimer.

It is found in the cytoplasm. It carries out the reaction glycolate + NAD(+) = glyoxylate + NADH + H(+). This is Glyoxylate reductase from Thermococcus onnurineus (strain NA1).